The primary structure comprises 151 residues: MREKIAALGLDVGKKRVGVAGCDGLGLIATGLTTIERTHFIADVEKFKQLVEERDIKVLVVGLPYSMNGTLGSQAKQVQNYATRLAKALQLPLEYVDERLTSYEAEEQLKAQKRFSTYNKGLVDRQAAAIILQQWLDQRRSLRLIELEDNL.

This sequence belongs to the YqgF nuclease family.

It is found in the cytoplasm. Could be a nuclease involved in processing of the 5'-end of pre-16S rRNA. The protein is Putative pre-16S rRNA nuclease of Gloeothece citriformis (strain PCC 7424) (Cyanothece sp. (strain PCC 7424)).